The following is a 506-amino-acid chain: Lysine--tRNA ligase (506 aa).

Glu-416 and Glu-423 together coordinate Mg(2+).

The protein belongs to the class-II aminoacyl-tRNA synthetase family. In terms of assembly, homodimer. Requires Mg(2+) as cofactor.

The protein resides in the cytoplasm. It catalyses the reaction tRNA(Lys) + L-lysine + ATP = L-lysyl-tRNA(Lys) + AMP + diphosphate. The sequence is that of Lysine--tRNA ligase from Pelotomaculum thermopropionicum (strain DSM 13744 / JCM 10971 / SI).